Reading from the N-terminus, the 521-residue chain is Transcription activator of gluconeogenesis SS1G_02293 (521 aa).

Positions 1–12 (MSGETEIDDPEV) are enriched in acidic residues. Residues 1-75 (MSGETEIDDP…KFDPKDPLRP (75 aa)) form a disordered region. Basic and acidic residues-rich tracts occupy residues 21-49 (YSDH…RPDG) and 65-74 (PKFDPKDPLR). Residues 84–112 (CFACQRAHLTCGDERPCQRCIKRGLADAC) constitute a DNA-binding region (zn(2)-C6 fungal-type). Disordered regions lie at residues 273 to 308 (SGSA…NPPF), 322 to 358 (VAPP…RDPS), and 478 to 501 (NTGN…PRMR). The span at 275-287 (SAETPPQDSSAGM) shows a compositional bias: polar residues. Low complexity-rich tracts occupy residues 297-308 (NNNPAFNNNPPF), 337-351 (KSGP…SALG), and 480-494 (GNSG…GRGS). The region spanning 426 to 497 (TLFEYEDFML…GSSGRGSFTT (72 aa)) is the PAS domain.

The protein belongs to the ERT1/acuK family.

It is found in the nucleus. Transcription factor which regulates nonfermentable carbon utilization. Activator of gluconeogenetic genes. This chain is Transcription activator of gluconeogenesis SS1G_02293, found in Sclerotinia sclerotiorum (strain ATCC 18683 / 1980 / Ss-1) (White mold).